We begin with the raw amino-acid sequence, 152 residues long: Biogenesis of lysosome-related organelles complex 1 subunit 1 (152 aa).

This sequence belongs to the BLOC1S1 family. In terms of assembly, component of the biogenesis of lysosome-related organelles complex-1 (BLOC-1). Interacts with BLOS2 and SNX1. Expressed in the whole plant (at protein level).

It localises to the cytoplasm. Its subcellular location is the endosome. Component of the biogenesis of lysosome-related organelles complex-1 (BLOC-1), a complex that mediates the vacuolar degradative transport via the intracellular vesicle trafficking from the endosome to the vacuole. Probably regulates the PIN1 and PIN2 homeostasis through its interaction with SNX1. The protein is Biogenesis of lysosome-related organelles complex 1 subunit 1 (BLOS1) of Arabidopsis thaliana (Mouse-ear cress).